The primary structure comprises 350 residues: Dihydroorotate dehydrogenase (quinone) (350 aa).

FMN contacts are provided by residues 61–65 and threonine 85; that span reads AGLDK. Lysine 65 is a substrate binding site. 110-114 lines the substrate pocket; it reads NRMGF. The FMN site is built by asparagine 139 and asparagine 172. Asparagine 172 is a binding site for substrate. Catalysis depends on serine 175, which acts as the Nucleophile. Residue asparagine 177 coordinates substrate. 2 residues coordinate FMN: lysine 217 and threonine 245. 246 to 247 is a substrate binding site; the sequence is NT. FMN is bound by residues glycine 268, glycine 297, and 318–319; that span reads YS.

This sequence belongs to the dihydroorotate dehydrogenase family. Type 2 subfamily. Monomer. FMN is required as a cofactor.

It is found in the cell membrane. The enzyme catalyses (S)-dihydroorotate + a quinone = orotate + a quinol. The protein operates within pyrimidine metabolism; UMP biosynthesis via de novo pathway; orotate from (S)-dihydroorotate (quinone route): step 1/1. Catalyzes the conversion of dihydroorotate to orotate with quinone as electron acceptor. The sequence is that of Dihydroorotate dehydrogenase (quinone) from Flavobacterium lutescens.